Here is a 223-residue protein sequence, read N- to C-terminus: Ribose-5-phosphate isomerase A (223 aa).

Substrate-binding positions include Thr29–Thr32, Asp82–Asp85, and Lys95–Gly98. The active-site Proton acceptor is the Glu104. Lys122 lines the substrate pocket.

This sequence belongs to the ribose 5-phosphate isomerase family. As to quaternary structure, homodimer.

It carries out the reaction aldehydo-D-ribose 5-phosphate = D-ribulose 5-phosphate. Its pathway is carbohydrate degradation; pentose phosphate pathway; D-ribose 5-phosphate from D-ribulose 5-phosphate (non-oxidative stage): step 1/1. In terms of biological role, catalyzes the reversible conversion of ribose-5-phosphate to ribulose 5-phosphate. This chain is Ribose-5-phosphate isomerase A, found in Neisseria meningitidis serogroup C / serotype 2a (strain ATCC 700532 / DSM 15464 / FAM18).